We begin with the raw amino-acid sequence, 275 residues long: Ceramide synthase (275 aa).

In terms of domain architecture, TLC spans 34 to 261 (ADAVIVSARL…ICRGACRLFR (228 aa)). Helical transmembrane passes span 130 to 150 (FLMV…SVVW), 159 to 179 (LGCM…KILI), 194 to 214 (ALML…LYWA), and 232 to 252 (AHVN…FFLI).

Each isoform has a distinct expression pattern. Isoform 1 is highly expressed in brain. Isoform 2 is expressed at low levels, if any, in all analyzed tissues, with slightly higher levels in testis. Isoform 3 is expressed at very high levels in testis and, at lower levels, in white adipose tissue. In epididymal fat, isoform 3 is expressed at higher levels in obese mice compared with lean mice. By contrast, isoform 1 and 2 levels are significantly lower in obese mice compared with lean mice.

The protein resides in the golgi apparatus membrane. Its subcellular location is the endoplasmic reticulum membrane. The enzyme catalyses sphing-4-enine + octadecanoyl-CoA = N-octadecanoylsphing-4-enine + CoA + H(+). The catalysed reaction is eicosanoyl-CoA + sphing-4-enine = N-eicosanoyl-sphing-4-enine + CoA + H(+). It carries out the reaction sphing-4-enine + hexadecanoyl-CoA = N-hexadecanoylsphing-4-enine + CoA + H(+). Functionally, involved in ceramide synthesis. In vitro, isoform 3 stimulates the production of C16-, C18- and C20-ceramides, isoform 1 slightly increases the levels of C18- and C20-ceramides, while isoform 2 exhibits only minimal activity. May interfere with adipogenesis by stimulating ceramide synthesis. The sequence is that of Ceramide synthase (Tlcd3b) from Mus musculus (Mouse).